Here is a 747-residue protein sequence, read N- to C-terminus: Phenylalanine ammonia-lyase 2 (747 aa).

A compositionally biased stretch (polar residues) spans 1–20 (MTILSGTTAAPRVNGTTMNG). The disordered stretch occupies residues 1–47 (MTILSGTTAAPRVNGTTMNGHSKPHTNGVHLNGHAPKATTESPWPQS). The Proton donor/acceptor role is filled by Y124. Positions 229-231 (ASG) form a cross-link, 5-imidazolinone (Ala-Gly). S230 is modified (2,3-didehydroalanine (Ser)). Residues N290, Q380, R386, N416, K487, E515, and N518 each coordinate (E)-cinnamate.

The protein belongs to the PAL/histidase family. Homotetramer. Contains an active site 4-methylidene-imidazol-5-one (MIO), which is formed autocatalytically by cyclization and dehydration of residues Ala-Ser-Gly.

It localises to the cytoplasm. It carries out the reaction L-phenylalanine = (E)-cinnamate + NH4(+). It participates in phenylpropanoid metabolism; trans-cinnamate biosynthesis; trans-cinnamate from L-phenylalanine: step 1/1. Catalyzes the non-oxidative deamination of L-phenylalanine to form trans-cinnamic acid and a free ammonium ion. Facilitates the commitment step in phenylpropanoid pathways that produce secondary metabolites such as lignins, coumarins and flavonoids. In Pleurotus ostreatus (Oyster mushroom), this protein is Phenylalanine ammonia-lyase 2.